The chain runs to 391 residues: Phosphoglycerate kinase (391 aa).

Residues 23–25 (DFN), arginine 38, 61–64 (HLGK), arginine 117, and arginine 150 each bind substrate. Residues lysine 201, glycine 291, glutamate 322, and 348-351 (GGDS) each bind ATP.

Belongs to the phosphoglycerate kinase family. Monomer.

The protein localises to the cytoplasm. It carries out the reaction (2R)-3-phosphoglycerate + ATP = (2R)-3-phospho-glyceroyl phosphate + ADP. Its pathway is carbohydrate degradation; glycolysis; pyruvate from D-glyceraldehyde 3-phosphate: step 2/5. The polypeptide is Phosphoglycerate kinase (Clostridium beijerinckii (strain ATCC 51743 / NCIMB 8052) (Clostridium acetobutylicum)).